The sequence spans 940 residues: Bifunctional uridylyltransferase/uridylyl-removing enzyme (940 aa).

The segment at 1-379 (MPRRLRPTRL…PGARPKRKAL (379 aa)) is uridylyltransferase. Residues 380–736 (DVEGFYEDGG…GQVRPGSNAA (357 aa)) are uridylyl-removing. The 123-residue stretch at 496–618 (VDEHTLRAVG…VENPERLRLL (123 aa)) folds into the HD domain. ACT domains lie at 737 to 821 (EVVI…PRRG) and 848 to 929 (VVEA…AARP).

This sequence belongs to the GlnD family. Mg(2+) is required as a cofactor.

It catalyses the reaction [protein-PII]-L-tyrosine + UTP = [protein-PII]-uridylyl-L-tyrosine + diphosphate. It carries out the reaction [protein-PII]-uridylyl-L-tyrosine + H2O = [protein-PII]-L-tyrosine + UMP + H(+). Its activity is regulated as follows. Uridylyltransferase (UTase) activity is inhibited by glutamine, while glutamine activates uridylyl-removing (UR) activity. Modifies, by uridylylation and deuridylylation, the PII regulatory proteins (GlnB and homologs), in response to the nitrogen status of the cell that GlnD senses through the glutamine level. Under low glutamine levels, catalyzes the conversion of the PII proteins and UTP to PII-UMP and PPi, while under higher glutamine levels, GlnD hydrolyzes PII-UMP to PII and UMP (deuridylylation). Thus, controls uridylylation state and activity of the PII proteins, and plays an important role in the regulation of nitrogen assimilation and metabolism. This Caulobacter vibrioides (strain ATCC 19089 / CIP 103742 / CB 15) (Caulobacter crescentus) protein is Bifunctional uridylyltransferase/uridylyl-removing enzyme.